The primary structure comprises 212 residues: Protein-L-isoaspartate O-methyltransferase (212 aa).

S60 is an active-site residue.

Belongs to the methyltransferase superfamily. L-isoaspartyl/D-aspartyl protein methyltransferase family.

It is found in the cytoplasm. It carries out the reaction [protein]-L-isoaspartate + S-adenosyl-L-methionine = [protein]-L-isoaspartate alpha-methyl ester + S-adenosyl-L-homocysteine. Functionally, catalyzes the methyl esterification of L-isoaspartyl residues in peptides and proteins that result from spontaneous decomposition of normal L-aspartyl and L-asparaginyl residues. It plays a role in the repair and/or degradation of damaged proteins. In Methanococcus maripaludis (strain DSM 14266 / JCM 13030 / NBRC 101832 / S2 / LL), this protein is Protein-L-isoaspartate O-methyltransferase.